The following is a 211-amino-acid chain: uncharacterized protein (211 aa).

Residues 1–27 form the signal peptide; that stretch reads MKRTSAALVVFLILLFLGLLFLPMFIV.

This is an uncharacterized protein from Archaeoglobus fulgidus (strain ATCC 49558 / DSM 4304 / JCM 9628 / NBRC 100126 / VC-16).